Here is a 705-residue protein sequence, read N- to C-terminus: Prolyl endopeptidase (705 aa).

The first 20 residues, 1–20 (MKYNKLSVAVAAFAFAAVSA), serve as a signal peptide directing secretion. Active-site charge relay system residues include Ser-556 and His-675.

It belongs to the peptidase S9A family. As to quaternary structure, monomer.

It localises to the periplasm. The catalysed reaction is Hydrolysis of Pro-|-Xaa &gt;&gt; Ala-|-Xaa in oligopeptides.. Its function is as follows. Cleaves peptide bonds on the C-terminal side of prolyl residues within peptides that are up to approximately 30 amino acids long. Has an absolute requirement for an X-Pro bond in the trans configuration immediately preceding the Pro-Y scissible bond. In Elizabethkingia meningoseptica (Chryseobacterium meningosepticum), this protein is Prolyl endopeptidase (f1pep1).